The sequence spans 231 residues: MKKTLLASSLAVGLGIVAGNAGHEAHASEADLNKASLAQMAQSNDQTLNQKPIEAGAYNYTFDYEGFTYHFESDGTHFAWNYHATGANGADMSAQAPATNNVAPSADQANQVQSQEVEAPQNAQTQQPQASTSNNSQVTATPTESKASEGSSVNVNDHLKQIAQRESGGNIHAVNPTSGAAGKYQFLQSTWDSVAPAKYKGVSPANAPESVQDAAAVKLYNTGGAGHWVTA.

A signal peptide spans 1-27 (MKKTLLASSLAVGLGIVAGNAGHEAHA). Residues 93–153 (SAQAPATNNV…ESKASEGSSV (61 aa)) are disordered. Over residues 96-116 (APATNNVAPSADQANQVQSQE) the composition is skewed to polar residues. Residues 119-137 (APQNAQTQQPQASTSNNSQ) show a composition bias toward low complexity. The segment covering 138 to 153 (VTATPTESKASEGSSV) has biased composition (polar residues).

Belongs to the transglycosylase family. SceD subfamily.

Its subcellular location is the secreted. Functionally, is able to cleave peptidoglycan and affects clumping and separation of bacterial cells. The protein is Probable transglycosylase SceD (sceD) of Staphylococcus aureus (strain bovine RF122 / ET3-1).